The chain runs to 141 residues: Nucleoside diphosphate kinase (141 aa).

Positions 11, 59, 87, 93, 104, and 114 each coordinate ATP. Residue His117 is the Pros-phosphohistidine intermediate of the active site.

The protein belongs to the NDK family. Mg(2+) is required as a cofactor.

Its subcellular location is the cytoplasm. The enzyme catalyses a 2'-deoxyribonucleoside 5'-diphosphate + ATP = a 2'-deoxyribonucleoside 5'-triphosphate + ADP. It catalyses the reaction a ribonucleoside 5'-diphosphate + ATP = a ribonucleoside 5'-triphosphate + ADP. In terms of biological role, major role in the synthesis of nucleoside triphosphates other than ATP. The ATP gamma phosphate is transferred to the NDP beta phosphate via a ping-pong mechanism, using a phosphorylated active-site intermediate. In Staphylothermus marinus (strain ATCC 43588 / DSM 3639 / JCM 9404 / F1), this protein is Nucleoside diphosphate kinase.